Consider the following 94-residue polypeptide: Small ribosomal subunit protein uS19 (94 aa).

The protein belongs to the universal ribosomal protein uS19 family.

Its function is as follows. Protein S19 forms a complex with S13 that binds strongly to the 16S ribosomal RNA. In Carboxydothermus hydrogenoformans (strain ATCC BAA-161 / DSM 6008 / Z-2901), this protein is Small ribosomal subunit protein uS19.